Here is a 258-residue protein sequence, read N- to C-terminus: Phosphate import ATP-binding protein PstB (258 aa).

In terms of domain architecture, ABC transporter spans 5–247 (LDLKDVNIYY…EKIFSNPTQK (243 aa)). 37–44 (GPSGCGKS) contributes to the ATP binding site.

This sequence belongs to the ABC transporter superfamily. Phosphate importer (TC 3.A.1.7) family. The complex is composed of two ATP-binding proteins (PstB), two transmembrane proteins (PstC and PstA) and a solute-binding protein (PstS).

Its subcellular location is the cell membrane. It carries out the reaction phosphate(out) + ATP + H2O = ADP + 2 phosphate(in) + H(+). Its function is as follows. Part of the ABC transporter complex PstSACB involved in phosphate import. Responsible for energy coupling to the transport system. This chain is Phosphate import ATP-binding protein PstB, found in Rhodococcus jostii (strain RHA1).